The following is a 562-amino-acid chain: Protein TBF1 (562 aa).

Positions 376–414 (ASMSNSSSGPHSSHNNSSNSNNNGSIGLRKPKAKRTWSK) are disordered. Low complexity predominate over residues 377-400 (SMSNSSSGPHSSHNNSSNSNNNGS). Residues 404 to 460 (RKPKAKRTWSKEEEEALVEGLKEVGPSWSKILDLYGPGGKITENLKNRTQVQLKDKA) enclose the HTH myb-type domain. The H-T-H motif DNA-binding region spans 431-456 (WSKILDLYGPGGKITENLKNRTQVQL). Positions 495-562 (FSQSPNSSTI…GFDPHLEDGM (68 aa)) are disordered. Polar residues-rich tracts occupy residues 496–522 (SQSP…ATED) and 532–552 (GQNS…SDNT).

In terms of assembly, homodimer.

The protein resides in the nucleus. The protein localises to the chromosome. It localises to the telomere. Functionally, binds the telomeric double-stranded TTAGGG repeat and negatively regulates telomere length. Involved in the regulation of gene expression. 52 binding sites have been identified, distributed over 15 chromosomes. A member of the general regulatory factors (GRFs) which act as genome partitioners. Acts as a chromatin insulator which are known as STARs (Subtelomeric anti-silencing region). STARs prevent negative or positive transcription influence by extending across chromatin to a promoter. This chain is Protein TBF1 (TBF1), found in Saccharomyces cerevisiae (strain ATCC 204508 / S288c) (Baker's yeast).